A 439-amino-acid polypeptide reads, in one-letter code: MGKGSEGRSAAREMTAEANGDKRKTILIEGVLYDATNFKHPGGSIINFLTEGEAGVDATQAYREFHQRSGKADKYLKSLPKLDASKVESRFSAKEQARRDAMTRDYAAFREELVAEGYFDPSIPHMIYRVVEIVALFALSFWLMSKASPTSLVLGVVMNGIAQGRCGWVMHEMGHGSFTGVIWLDDRMCEFFYGVGCGMSGHYWKNQHSKHHAAPNRLEHDVDLNTLPLVAFNERVVRKVKPGSLLALWLRVQAYLFAPVSCLLIGLGWTLYLHPRYMLRTKRHMEFVWIFARYIGWFSLMGALGYSPGTSVGMYLCSFGLGCIYIFLQFAVSHTHLPVTNPEDQLHWLEYAADHTVNISTKSWLVTWWMSNLNFQIEHHLFPTAPQFRFKEISPRVEALFKRHNLPYYDLPYTSAVSTTFANLYSVGHSVGADTKKQD.

The 82-residue stretch at glycine 7–glutamate 88 folds into the Cytochrome b5 heme-binding domain. Residues histidine 40 and histidine 66 each contribute to the heme site. A helical membrane pass occupies residues isoleucine 123–leucine 143. The Histidine box-1 signature appears at histidine 171–histidine 175. The short motif at histidine 208–alanine 213 is the Histidine box-2 element. Transmembrane regions (helical) follow at residues alanine 254–histidine 274, phenylalanine 287–serine 307, and valine 312–valine 332. A Histidine box-3 motif is present at residues glutamine 376–histidine 380.

The protein belongs to the fatty acid desaturase type 1 family. It depends on Fe(2+) as a cofactor.

It is found in the membrane. It catalyses the reaction an (8Z,11Z,14Z)-icosatrienoyl-containing glycerolipid + 2 Fe(II)-[cytochrome b5] + O2 + 2 H(+) = (5Z,8Z,11Z,14Z)-eicosatetraenoyl-containing glycerolipid + 2 Fe(III)-[cytochrome b5] + 2 H2O. The enzyme catalyses an (8Z,11Z,14Z,17Z)-eicosatetraenoyl-containing glycerolipid + 2 Fe(II)-[cytochrome b5] + O2 + 2 H(+) = a (5Z,8Z,11Z,14Z,17Z)-eicosapentaenoyl-containing glycerolipid + 2 Fe(III)-[cytochrome b5] + 2 H2O. Functionally, fatty acid desaturase that introduces a cis double bond at the 5-position in 20-carbon polyunsaturated fatty acids incorporated in a glycerolipid that contain a Delta(8) double bond. The protein is Acyl-lipid (8-3)-desaturase of Thraustochytrium sp.